The chain runs to 445 residues: MYNQQTYPSFTHNPALMPDGSGQYNLGTYTGMARHPHQAQAFFPFSGVKSDYGDLGGQTTSVGDTSAWNPLTSLDSANQLGISGQGNPFKNLKREREDDEEKSESPEPKCSPPSLPPAYYTHAWNPTTTFWSQVSSSGTTVVSKPLPTPLQPGDKCDPVEANKIFTSSPDKSGESGISSLDNSRCSSATSSSSGGTNVGTPRSLSRGASDGLSSDSEEEAPNSGEMEQFAKDLKHKRITMGYTQADVGYALGVLFGKTFSQTTICRFESLQLSFKNMCKLKPLLRSWLHEVENNENLQEIISRGQIIPQVQKRKHRTSIENNVKCTLENYFMQCSKPSAQEIAQIARELNMEKDVVRVWFCNRRQKGKRQVYPYIRENGGEPYDAPQTLTPPSQGPFPLPQVMPSQVFPTVPLGANPTIYVPTYHKNDMFPQAMHHGIGMGNQGN.

2 stretches are compositionally biased toward polar residues: residues 76–88 (SANQ…QGNP) and 164–182 (IFTS…SLDN). Disordered stretches follow at residues 76–116 (SANQ…PSLP) and 139–227 (TTVV…GEME). The span at 183–200 (SRCSSATSSSSGGTNVGT) shows a compositional bias: low complexity. Residues 218 to 292 (EEAPNSGEME…LLRSWLHEVE (75 aa)) enclose the POU-specific domain. The segment at residues 312 to 371 (KRKHRTSIENNVKCTLENYFMQCSKPSAQEIAQIARELNMEKDVVRVWFCNRRQKGKRQV) is a DNA-binding region (homeobox).

Belongs to the POU transcription factor family. Class-5 subfamily. Interacts with the transcription factors tcf7l1/tcf3 and vegt. As to expression, initially (stage 9) expressed in all regions of the embryo, becoming localized to the ventroposterior regions by early neurula stages. In adults, expressed at a low level in the brain.

The protein localises to the nucleus. Functionally, transcription factor that binds to the octamer motif (5'-ATTTGCAT-3'). Antagonizes the activity of nodal/activin signaling during gastrulation to suppress mesendoderm formation. This chain is POU domain, class 5, transcription factor 1.2 (pou5f1.2), found in Xenopus laevis (African clawed frog).